The following is a 469-amino-acid chain: Aspartyl/glutamyl-tRNA(Asn/Gln) amidotransferase subunit B (469 aa).

The protein belongs to the GatB/GatE family. GatB subfamily. As to quaternary structure, heterotrimer of A, B and C subunits.

It carries out the reaction L-glutamyl-tRNA(Gln) + L-glutamine + ATP + H2O = L-glutaminyl-tRNA(Gln) + L-glutamate + ADP + phosphate + H(+). The enzyme catalyses L-aspartyl-tRNA(Asn) + L-glutamine + ATP + H2O = L-asparaginyl-tRNA(Asn) + L-glutamate + ADP + phosphate + 2 H(+). Functionally, allows the formation of correctly charged Asn-tRNA(Asn) or Gln-tRNA(Gln) through the transamidation of misacylated Asp-tRNA(Asn) or Glu-tRNA(Gln) in organisms which lack either or both of asparaginyl-tRNA or glutaminyl-tRNA synthetases. The reaction takes place in the presence of glutamine and ATP through an activated phospho-Asp-tRNA(Asn) or phospho-Glu-tRNA(Gln). This Thermus thermophilus (strain ATCC 27634 / DSM 579 / HB8) protein is Aspartyl/glutamyl-tRNA(Asn/Gln) amidotransferase subunit B.